The chain runs to 905 residues: Protein translocase subunit SecA (905 aa).

Residues Q89, 107–111 (GEGKT), and D502 each bind ATP. The tract at residues 837–885 (EQTDVGDPILNDQNKKNSSTLWTPSQENKFVNPKDRNPSDSTTWGKVGR) is disordered. Over residues 852 to 865 (KNSSTLWTPSQENK) the composition is skewed to polar residues. The Zn(2+) site is built by C889, C891, C900, and H901.

Belongs to the SecA family. In terms of assembly, monomer and homodimer. Part of the essential Sec protein translocation apparatus which comprises SecA, SecYEG and auxiliary proteins SecDF-YajC and YidC. It depends on Zn(2+) as a cofactor.

It is found in the cell inner membrane. Its subcellular location is the cytoplasm. It carries out the reaction ATP + H2O + cellular proteinSide 1 = ADP + phosphate + cellular proteinSide 2.. Part of the Sec protein translocase complex. Interacts with the SecYEG preprotein conducting channel. Has a central role in coupling the hydrolysis of ATP to the transfer of proteins into and across the cell membrane, serving both as a receptor for the preprotein-SecB complex and as an ATP-driven molecular motor driving the stepwise translocation of polypeptide chains across the membrane. The protein is Protein translocase subunit SecA of Bartonella henselae (strain ATCC 49882 / DSM 28221 / CCUG 30454 / Houston 1) (Rochalimaea henselae).